The following is a 715-amino-acid chain: ABC transporter F family member 3 (715 aa).

Thr2 is modified (N-acetylthreonine). Positions 96–118 (VRMNDGMDDGPVKKKKPEPVDGP) are disordered. ABC transporter domains lie at 175-436 (IHMD…KNQQ) and 504-713 (ISFS…LLQS). ATP contacts are provided by residues 207 to 214 (GRNGTGKT) and 537 to 544 (GPNGIGKS).

Belongs to the ABC transporter superfamily. ABCF family. EF3 (TC 3.A.1.121) subfamily.

In Arabidopsis thaliana (Mouse-ear cress), this protein is ABC transporter F family member 3 (ABCF3).